Reading from the N-terminus, the 178-residue chain is Bifunctional protein PyrR (178 aa).

The PRPP-binding motif lies at 99–111 (VILVDDVLFTGRT).

The protein belongs to the purine/pyrimidine phosphoribosyltransferase family. PyrR subfamily. In terms of assembly, homodimer and homohexamer; in equilibrium.

It carries out the reaction UMP + diphosphate = 5-phospho-alpha-D-ribose 1-diphosphate + uracil. In terms of biological role, regulates transcriptional attenuation of the pyrimidine nucleotide (pyr) operon by binding in a uridine-dependent manner to specific sites on pyr mRNA. This disrupts an antiterminator hairpin in the RNA and favors formation of a downstream transcription terminator, leading to a reduced expression of downstream genes. Its function is as follows. Also displays a weak uracil phosphoribosyltransferase activity which is not physiologically significant. The polypeptide is Bifunctional protein PyrR (Limosilactobacillus reuteri subsp. reuteri (strain JCM 1112) (Lactobacillus reuteri)).